The primary structure comprises 60 residues: MKYFVVLVVLALILAIAVGPSDAVFIDILDKMENAIHKAAQAGIGIAKPIENMILPKLTK.

Residues 1 to 23 form the signal peptide; the sequence is MKYFVVLVVLALILAIAVGPSDA.

The protein belongs to the andropin family. As to expression, ejaculatory duct of adult males.

The protein localises to the secreted. Male-specific peptide with moderate activity against Gram-positive bacteria. The polypeptide is Andropin (Anp) (Drosophila simulans (Fruit fly)).